The primary structure comprises 619 residues: Magnesium-chelatase 67 kDa subunit (619 aa).

Position 33-40 (33-40 (STVGSGKS)) interacts with ATP. A disordered region spans residues 273-321 (TRMPEREPSEEEMQQEEPPPPEEQPEQEGEDENAPPDETDSDADEEQEE). Acidic residues predominate over residues 280-321 (PSEEEMQQEEPPPPEEQPEQEGEDENAPPDETDSDADEEQEE). The VWFA domain occupies 431–619 (LFIFMVDASG…AEQIVEAALS (189 aa)).

Belongs to the Mg-chelatase subunits D/I family.

It catalyses the reaction protoporphyrin IX + Mg(2+) + ATP + H2O = Mg-protoporphyrin IX + ADP + phosphate + 3 H(+). Its pathway is porphyrin-containing compound metabolism; bacteriochlorophyll biosynthesis. Functionally, involved in bacteriochlorophyll biosynthesis; introduces a magnesium ion into protoporphyrin IX to yield Mg-protoporphyrin IX. This chain is Magnesium-chelatase 67 kDa subunit (bchD), found in Chlorobaculum parvum (strain DSM 263 / NCIMB 8327) (Chlorobium vibrioforme subsp. thiosulfatophilum).